The primary structure comprises 103 residues: Large ribosomal subunit protein uL24 (103 aa).

Belongs to the universal ribosomal protein uL24 family. In terms of assembly, part of the 50S ribosomal subunit.

Its function is as follows. One of two assembly initiator proteins, it binds directly to the 5'-end of the 23S rRNA, where it nucleates assembly of the 50S subunit. In terms of biological role, one of the proteins that surrounds the polypeptide exit tunnel on the outside of the subunit. This is Large ribosomal subunit protein uL24 from Brucella ovis (strain ATCC 25840 / 63/290 / NCTC 10512).